The primary structure comprises 486 residues: Ribulose bisphosphate carboxylase large chain (486 aa).

Substrate is bound by residues asparagine 126 and threonine 176. Lysine 178 serves as the catalytic Proton acceptor. Lysine 180 is a binding site for substrate. The Mg(2+) site is built by lysine 204, aspartate 206, and glutamate 207. The residue at position 204 (lysine 204) is an N6-carboxylysine. The active-site Proton acceptor is histidine 296. Positions 297, 329, and 381 each coordinate substrate.

It belongs to the RuBisCO large chain family. Type I subfamily. In terms of assembly, heterohexadecamer of 8 large chains and 8 small chains. The cofactor is Mg(2+).

It catalyses the reaction 2 (2R)-3-phosphoglycerate + 2 H(+) = D-ribulose 1,5-bisphosphate + CO2 + H2O. The catalysed reaction is D-ribulose 1,5-bisphosphate + O2 = 2-phosphoglycolate + (2R)-3-phosphoglycerate + 2 H(+). In terms of biological role, ruBisCO catalyzes two reactions: the carboxylation of D-ribulose 1,5-bisphosphate, the primary event in carbon dioxide fixation, as well as the oxidative fragmentation of the pentose substrate. Both reactions occur simultaneously and in competition at the same active site. The polypeptide is Ribulose bisphosphate carboxylase large chain (Cupriavidus taiwanensis (strain DSM 17343 / BCRC 17206 / CCUG 44338 / CIP 107171 / LMG 19424 / R1) (Ralstonia taiwanensis (strain LMG 19424))).